Consider the following 81-residue polypeptide: Short neurotoxin 2 (81 aa).

Residues 1–21 (MKTLLLTLVVVTIVCLDLGYT) form the signal peptide. 4 cysteine pairs are disulfide-bonded: Cys-24/Cys-43, Cys-38/Cys-60, Cys-62/Cys-73, and Cys-74/Cys-79.

The protein belongs to the three-finger toxin family. Short-chain subfamily. Type I alpha-neurotoxin sub-subfamily. As to expression, expressed by the venom gland.

The protein resides in the secreted. In terms of biological role, binds to muscle nicotinic acetylcholine receptor (nAChR) and inhibit acetylcholine from binding to the receptor, thereby impairing neuromuscular transmission. The chain is Short neurotoxin 2 from Cryptophis nigrescens (Eastern small-eyed snake).